Consider the following 134-residue polypeptide: Transcription antitermination protein NusB (134 aa).

This sequence belongs to the NusB family.

In terms of biological role, involved in transcription antitermination. Required for transcription of ribosomal RNA (rRNA) genes. Binds specifically to the boxA antiterminator sequence of the ribosomal RNA (rrn) operons. In Shewanella sp. (strain W3-18-1), this protein is Transcription antitermination protein NusB.